Consider the following 444-residue polypeptide: Adenylosuccinate synthetase (444 aa).

Residues 12 to 18 (GDEGKGK) and 40 to 42 (GHT) each bind GTP. The active-site Proton acceptor is the Asp-13. Residues Asp-13 and Gly-40 each contribute to the Mg(2+) site. IMP contacts are provided by residues 13-16 (DEGK), 38-41 (NAGH), Thr-128, Arg-142, Gln-223, Thr-238, and Arg-302. His-41 (proton donor) is an active-site residue. 298-304 (TTTGRRR) lines the substrate pocket. Residues Arg-304, 330–332 (KLD), and 412–414 (SLG) contribute to the GTP site.

This sequence belongs to the adenylosuccinate synthetase family. In terms of assembly, homodimer. Requires Mg(2+) as cofactor.

It localises to the cytoplasm. The catalysed reaction is IMP + L-aspartate + GTP = N(6)-(1,2-dicarboxyethyl)-AMP + GDP + phosphate + 2 H(+). Its pathway is purine metabolism; AMP biosynthesis via de novo pathway; AMP from IMP: step 1/2. Plays an important role in the de novo pathway of purine nucleotide biosynthesis. Catalyzes the first committed step in the biosynthesis of AMP from IMP. This Synechococcus sp. (strain ATCC 27144 / PCC 6301 / SAUG 1402/1) (Anacystis nidulans) protein is Adenylosuccinate synthetase.